We begin with the raw amino-acid sequence, 675 residues long: G-protein-signaling modulator 1 (675 aa).

Residues 1–509 (MAGPAPPVAD…DLLTKFQSSR (509 aa)) are mediates association with membranes. 9 TPR repeats span residues 28–61 (CLEL…GTED), 66–99 (SAIY…ARTI), 106–139 (AKAS…AQEQ), 146–181 (ARAL…PPDV), 183–202 (ETLC…VKEL), 209–242 (GRAY…AKEF), 249–282 (RRAY…SRQL), 289–322 (AQAC…AQEL), and 329–362 (GRAC…SQEI). An interaction with STK11/LKB1 region spans residues 364–487 (DRHGELTARM…VRVHVPRTSI (124 aa)). The tract at residues 391–412 (SEKPDLAGYEAQGARPKRTQRL) is disordered. Serine 413 is subject to Phosphoserine. Position 421 is an omega-N-methylarginine (arginine 421). The segment covering 424 to 442 (LEREQNGDSHHSGDWRGPS) has biased composition (basic and acidic residues). Positions 424–492 (LEREQNGDSH…PRTSIPRAPS (69 aa)) are disordered. A phosphoserine mark is found at serine 445, serine 469, serine 471, serine 492, and serine 493. Residues 454–469 (KYQEGPDAERRPREGS) show a composition bias toward basic and acidic residues. The region spanning 495-517 (EECFFDLLTKFQSSRMDDQRCPL) is the GoLoco 1 domain. 2 positions are modified to phosphoserine: serine 545 and serine 569. GoLoco domains lie at 548-570 (TEEF…RASV), 596-618 (GDDF…RCPP), and 630-652 (DEDF…RVDL). Disordered stretches follow at residues 610–630 (RIDD…TMPD) and 644–675 (RMDE…PGAS).

Belongs to the GPSM family. Interacts with GNAI1, GNAI2 and GNAI3 preferentially in their GDP-bound state. May also interact with GNAO1. Interacts with STK11/LKB1 and MACF1. Interacts with INSC/inscuteable and FRMPD1. In terms of processing, phosphorylation regulates interaction with G(i/o) alpha. In terms of tissue distribution, expressed in intestinal cells.

It localises to the cytoplasm. It is found in the cytosol. Its subcellular location is the endoplasmic reticulum membrane. The protein resides in the golgi apparatus membrane. The protein localises to the cell membrane. Its function is as follows. Guanine nucleotide dissociation inhibitor (GDI) which functions as a receptor-independent activator of heterotrimeric G-protein signaling. Keeps G(i/o) alpha subunit in its GDP-bound form thus uncoupling heterotrimeric G-proteins signaling from G protein-coupled receptors. Controls spindle orientation and asymmetric cell fate of cerebral cortical progenitors. May also be involved in macroautophagy in intestinal cells. May play a role in drug addiction. The sequence is that of G-protein-signaling modulator 1 (GPSM1) from Homo sapiens (Human).